The chain runs to 158 residues: Transcription elongation factor GreA (158 aa).

The protein belongs to the GreA/GreB family.

Functionally, necessary for efficient RNA polymerase transcription elongation past template-encoded arresting sites. The arresting sites in DNA have the property of trapping a certain fraction of elongating RNA polymerases that pass through, resulting in locked ternary complexes. Cleavage of the nascent transcript by cleavage factors such as GreA or GreB allows the resumption of elongation from the new 3'terminus. GreA releases sequences of 2 to 3 nucleotides. This Salmonella typhi protein is Transcription elongation factor GreA.